The primary structure comprises 305 residues: 2-pyrone-4,6-dicarbaxylate hydrolase (305 aa).

Substrate is bound by residues 32–34 (HCH), tyrosine 50, threonine 78, arginine 125, arginine 131, tyrosine 158, and histidine 182. Aspartate 258 functions as the Proton acceptor in the catalytic mechanism. Asparagine 263 lines the substrate pocket.

The protein belongs to the metallo-dependent hydrolases superfamily. PDC hydrolase family.

It carries out the reaction 2-oxo-2H-pyran-4,6-dicarboxylate + H2O = (1E)-4-oxobut-1-ene-1,2,4-tricarboxylate + H(+). Strongly inhibited by 1 mM Zn(2+), Cu(2+), Mn(2+) and Co(2+) ions. Also inhibited by 5,5'-dithiobis(2-nitrobenzoic acid) (Ellman reagent) in vitro. In terms of biological role, involved in the degradation of aromatic compounds via the protocatechuate 4,5-cleavage pathway. Catalyzes the hydrolysis of 2-pyrone-4,6-dicarboxylate (PDC) to oxalomesaconate (OMA). Also catalyzes the reverse reaction. This Comamonas testosteroni (Pseudomonas testosteroni) protein is 2-pyrone-4,6-dicarbaxylate hydrolase.